Here is a 366-residue protein sequence, read N- to C-terminus: 3-dehydroquinate synthase (366 aa).

NAD(+) is bound by residues 73–78 (DGERAK), 107–111 (GVVGD), 131–132 (TT), K144, and K153. Positions 186, 249, and 266 each coordinate Zn(2+).

Belongs to the sugar phosphate cyclases superfamily. Dehydroquinate synthase family. Co(2+) is required as a cofactor. Requires Zn(2+) as cofactor. NAD(+) serves as cofactor.

It is found in the cytoplasm. The catalysed reaction is 7-phospho-2-dehydro-3-deoxy-D-arabino-heptonate = 3-dehydroquinate + phosphate. It participates in metabolic intermediate biosynthesis; chorismate biosynthesis; chorismate from D-erythrose 4-phosphate and phosphoenolpyruvate: step 2/7. Catalyzes the conversion of 3-deoxy-D-arabino-heptulosonate 7-phosphate (DAHP) to dehydroquinate (DHQ). This chain is 3-dehydroquinate synthase, found in Koribacter versatilis (strain Ellin345).